Consider the following 79-residue polypeptide: U24-theraphotoxin-Cg1a (79 aa).

An N-terminal signal peptide occupies residues 1–19 (MRVLFIIAVLALISVGCYA). Residues 20–44 (SEMKDRSSRNEVLSAIFAIEEPQER) constitute a propeptide that is removed on maturation. Intrachain disulfides connect Cys46–Cys61, Cys53–Cys66, and Cys60–Cys73. Trp78 is modified (tryptophan amide).

Belongs to the neurotoxin 10 (Hwtx-1) family. 35 (Jztx-27) subfamily. Expressed by the venom gland.

It localises to the secreted. Its function is as follows. Probable ion channel inhibitor. The protein is U24-theraphotoxin-Cg1a of Chilobrachys guangxiensis (Chinese earth tiger tarantula).